Reading from the N-terminus, the 210-residue chain is Peptidyl-tRNA hydrolase (210 aa).

Tyr30 serves as a coordination point for tRNA. The active-site Proton acceptor is the His35. TRNA is bound by residues Tyr81, Asn83, and Asn129.

Belongs to the PTH family. As to quaternary structure, monomer.

The protein resides in the cytoplasm. The catalysed reaction is an N-acyl-L-alpha-aminoacyl-tRNA + H2O = an N-acyl-L-amino acid + a tRNA + H(+). In terms of biological role, hydrolyzes ribosome-free peptidyl-tRNAs (with 1 or more amino acids incorporated), which drop off the ribosome during protein synthesis, or as a result of ribosome stalling. Catalyzes the release of premature peptidyl moieties from peptidyl-tRNA molecules trapped in stalled 50S ribosomal subunits, and thus maintains levels of free tRNAs and 50S ribosomes. In Bordetella petrii (strain ATCC BAA-461 / DSM 12804 / CCUG 43448), this protein is Peptidyl-tRNA hydrolase.